A 247-amino-acid polypeptide reads, in one-letter code: DNA polymerase sliding clamp (247 aa).

The protein belongs to the PCNA family. In terms of assembly, homotrimer. The subunits circularize to form a toroid; DNA passes through its center. Replication factor C (RFC) is required to load the toroid on the DNA.

Sliding clamp subunit that acts as a moving platform for DNA processing. Responsible for tethering the catalytic subunit of DNA polymerase and other proteins to DNA during high-speed replication. This chain is DNA polymerase sliding clamp, found in Methanosphaerula palustris (strain ATCC BAA-1556 / DSM 19958 / E1-9c).